A 176-amino-acid chain; its full sequence is Large ribosomal subunit protein uL16 (176 aa).

It belongs to the universal ribosomal protein uL16 family.

This is Large ribosomal subunit protein uL16 from Thermoplasma acidophilum (strain ATCC 25905 / DSM 1728 / JCM 9062 / NBRC 15155 / AMRC-C165).